The following is a 60-amino-acid chain: Regulatory protein DegR (60 aa).

In terms of biological role, stabilizes the phosphorylated form of DegU, leading to enhanced production of levansucrase, alkaline protease, and neutral protease. The protein is Regulatory protein DegR (degR) of Bacillus subtilis subsp. natto.